The sequence spans 546 residues: Probable protein kinase UbiB (546 aa).

In terms of domain architecture, Protein kinase spans 124–502 (DFSVEPLASA…HVRQGQSRYL (379 aa)). ATP contacts are provided by residues 130–138 (LASASIAQV) and K153. The Proton acceptor role is filled by D288. 2 helical membrane-spanning segments follow: residues 501–521 (YLFGIGAVLLLSGTLLFIHRP) and 522–542 (EWGMMPGWLMAGGVVTWLIGW).

The protein belongs to the ABC1 family. UbiB subfamily.

The protein localises to the cell inner membrane. It participates in cofactor biosynthesis; ubiquinone biosynthesis [regulation]. In terms of biological role, is probably a protein kinase regulator of UbiI activity which is involved in aerobic coenzyme Q (ubiquinone) biosynthesis. The chain is Probable protein kinase UbiB from Klebsiella pneumoniae subsp. pneumoniae (strain ATCC 700721 / MGH 78578).